The primary structure comprises 90 residues: MANSKQAKKRIIQAERNRQHNVARRSMMRTFLKKAAYAIEKGDVEAAKENFAKVVPILDKYASKGLIHKNKAARHKSRLSAKIKALSTAA.

This sequence belongs to the bacterial ribosomal protein bS20 family.

Functionally, binds directly to 16S ribosomal RNA. The sequence is that of Small ribosomal subunit protein bS20 from Francisella philomiragia subsp. philomiragia (strain ATCC 25017 / CCUG 19701 / FSC 153 / O#319-036).